Consider the following 512-residue polypeptide: MQSGGRQAEAPGRGPRVLVVGGGIAGLGAAQRLCRHPAFSHLRVLEATARAGGRIRSEHSFGGVVEVGAHWIHGPSQGNPVFQLAAKYGLLGEKALSEENQLIETGGHVGLPSVSYASSGVSVSLELVAEMASLFYSLIDQTREFLQAAETTPPSVGEYLKEKIRQHMAGWTEDEETKKLKLAILKNLFNVECCVSGTHSMDLVALAPFGEYTVLPGLDCTFPEGYQGLTDCIMASLPKDVMVFDKPVKTIHWNGSFREASAPGETFPVLVECEDGDCFPAHHVVVTVPLGFFKKHLDTFFEPPLPTEKVEAIRKIGFGTNNKIFLEFEEPFWEPDCQHIQVVWEDMSPLEDTAPELQDAWFKKLIGFWVLPPFQASHVLCGFIAGLESEFMETLSDEDVLRSLTQVLRRVTGNPQLPAPRSMLRSCWHSAPYTRGSYSYVAVGSSGDDMDRLAQPLPSDGKGAQLQVLFAGEATHRTFYSTTHGALLSGWREADRLMTLWDPQAQWPEPRL.

Met1 is subject to N-acetylmethionine. Positions 1–6 (MQSGGR) are excised as a propeptide. FAD contacts are provided by residues Ala25, Glu46, Arg54, and 70 to 71 (HW). Residues His73 and Val195 each coordinate substrate. An FAD-binding site is contributed by Val248. Asn321 is a substrate binding site. Residues Glu473 and 482-483 (TT) each bind FAD. Residues 510–512 (PRL) carry the Microbody targeting signal motif.

The protein belongs to the flavin monoamine oxidase family. In terms of assembly, monomer. It depends on FAD as a cofactor.

Its subcellular location is the peroxisome. It is found in the cytoplasm. The enzyme catalyses N(1)-acetylspermine + O2 + H2O = 3-acetamidopropanal + spermidine + H2O2. It carries out the reaction N(1)-acetylspermidine + O2 + H2O = 3-acetamidopropanal + putrescine + H2O2. It catalyses the reaction N(1),N(12)-diacetylspermine + O2 + H2O = 3-acetamidopropanal + N(1)-acetylspermidine + H2O2. It participates in amine and polyamine metabolism; spermine metabolism. Its function is as follows. Flavoenzyme which catalyzes the oxidation of N(1)-acetylspermine to spermidine and is thus involved in the polyamine back-conversion. Can also oxidize N(1)-acetylspermidine to putrescine. Substrate specificity: N(1)-acetylspermine = N(1)-acetylspermidine &gt; N(1),N(12)-diacylspermine &gt;&gt; spermine. Does not oxidize spermidine. Plays an important role in the regulation of polyamine intracellular concentration. This Bos taurus (Bovine) protein is Peroxisomal N(1)-acetyl-spermine/spermidine oxidase (PAOX).